The primary structure comprises 952 residues: Leucine--tRNA ligase (952 aa).

Residues 66-77 (PYPSGAGLHVGH) carry the 'HIGH' region motif. Residues 722–726 (KMGKS) carry the 'KMSKS' region motif. Lysine 725 contributes to the ATP binding site.

This sequence belongs to the class-I aminoacyl-tRNA synthetase family.

It localises to the cytoplasm. It carries out the reaction tRNA(Leu) + L-leucine + ATP = L-leucyl-tRNA(Leu) + AMP + diphosphate. The protein is Leucine--tRNA ligase of Corynebacterium glutamicum (strain ATCC 13032 / DSM 20300 / JCM 1318 / BCRC 11384 / CCUG 27702 / LMG 3730 / NBRC 12168 / NCIMB 10025 / NRRL B-2784 / 534).